A 147-amino-acid polypeptide reads, in one-letter code: MASLRLFLLCLAGLIFASEAGPGGAGESKCPLMVKVLDAVRGSPAVDVAVKVFKKTADGSWEPFASGKTAESGELHGLTTDEKFTEGVYRVELDTKSYWKALGISPFHEYAEVVFTANDSGHRHYTIAALLSPYSYSTTAVVSNPQN.

The first 20 residues, 1 to 20 (MASLRLFLLCLAGLIFASEA), serve as a signal peptide directing secretion. Cysteine 30 bears the Sulfocysteine mark. Residue lysine 35 coordinates L-thyroxine. Glutamate 62 carries the post-translational modification 4-carboxyglutamate. Serine 72 is subject to Phosphoserine. An L-thyroxine-binding site is contributed by glutamate 74. A glycan (N-linked (GlcNAc...) asparagine) is linked at asparagine 118. An L-thyroxine-binding site is contributed by serine 137.

This sequence belongs to the transthyretin family. Homotetramer. Dimer of dimers. In the homotetramer, subunits assemble around a central channel that can accommodate two ligand molecules. Interacts with RBP4. Post-translationally, sulfonation of the reactive cysteine Cys-30 enhances the stability of the native conformation of TTR, avoiding misassembly of the protein leading to amyloid formation. In terms of tissue distribution, detected in serum and cerebrospinal fluid (at protein level). Highly expressed in the choroid plexus. Detected at lower levels in the liver.

The protein resides in the secreted. Thyroid hormone-binding protein. Probably transports thyroxine from the bloodstream to the brain. This is Transthyretin (Ttr) from Rattus norvegicus (Rat).